Here is a 467-residue protein sequence, read N- to C-terminus: Peptidoglycan-N-acetylmuramic acid deacetylase PdaC (467 aa).

A helical transmembrane segment spans residues 6 to 26 (IKWFHVLIAVVCVVGLIGFFH). The region spanning 278-452 (KVIALTFDDG…KLTDQGYQLV (175 aa)) is the NodB homology domain. Asp285 acts as the Proton acceptor in catalysis. Asp286, His336, and His340 together coordinate a divalent metal cation. The active-site Proton donor is His427.

In the N-terminal section; belongs to the RsiV family. The protein in the C-terminal section; belongs to the polysaccharide deacetylase family.

The protein resides in the cell membrane. Activated by divalent metal cations; Mn(2+) is the most efficient, followed by Ca(2+) and Mg(2+). In contrast to PgdA from S.pneumoniae, these ions are not absolutely required for deacetylase activity. Functionally, catalyzes the deacetylation of N-acetylmuramic acid (MurNAc) residues in peptidoglycan, a modification that confers resistance to lysosyme. Is not able to deacetylate N-acetylglucosamine (GlcNAc) residues in peptidoglycan, but can deacylate chitin oligomers such as GlcNAc4 and GlcNAc5. Is essentially not active toward chitosan (partially deacetylated GlcNAc polymer) and has very low activity toward chitin (GlcNAc polymer). Does not deacetylate GlcNAc. The polypeptide is Peptidoglycan-N-acetylmuramic acid deacetylase PdaC (pdaC) (Bacillus subtilis (strain 168)).